Consider the following 365-residue polypeptide: tRNA/tmRNA (uracil-C(5))-methyltransferase (365 aa).

Residues Gln188, Tyr216, Asn221, Glu237, and Asp297 each contribute to the S-adenosyl-L-methionine site. Residue Cys322 is the Nucleophile of the active site. The active-site Proton acceptor is the Glu356.

The protein belongs to the class I-like SAM-binding methyltransferase superfamily. RNA M5U methyltransferase family. TrmA subfamily.

It carries out the reaction uridine(54) in tRNA + S-adenosyl-L-methionine = 5-methyluridine(54) in tRNA + S-adenosyl-L-homocysteine + H(+). The catalysed reaction is uridine(341) in tmRNA + S-adenosyl-L-methionine = 5-methyluridine(341) in tmRNA + S-adenosyl-L-homocysteine + H(+). In terms of biological role, dual-specificity methyltransferase that catalyzes the formation of 5-methyluridine at position 54 (m5U54) in all tRNAs, and that of position 341 (m5U341) in tmRNA (transfer-mRNA). The chain is tRNA/tmRNA (uracil-C(5))-methyltransferase from Aggregatibacter aphrophilus (strain NJ8700) (Haemophilus aphrophilus).